A 182-amino-acid chain; its full sequence is Aralkylamine dehydrogenase light chain (182 aa).

Positions 1-47 form a signal peptide, tat-type signal; it reads MRWLDKFGESLSRSVAHKTSRRSVLRSVGKLMVGSAFVLPVLPVARA. 7 cysteine pairs are disulfide-bonded: Cys75/Cys140, Cys81/Cys113, Cys88/Cys171, Cys90/Cys138, Cys91/Cys135, Cys98/Cys129, and Cys130/Cys161. Asp84 is a binding site for substrate. The active-site Tryptophylquinone 6'-substrate hemiaminal intermediate is Trp109. A Tryptophylquinone modification is found at Trp109. The segment at residues 109 to 160 is a cross-link (tryptophan tryptophylquinone (Trp-Trp)); sequence WIGTCHNPHDGKDYLISYHDCCGKTACGRCQCNTQTRERPGYEFFLHNDVNW. Asp128 (proton acceptor) is an active-site residue. 156–158 serves as a coordination point for substrate; it reads NDV.

This sequence belongs to the aromatic amine dehydrogenase light chain family. In terms of assembly, heterotetramer of two light and two heavy chains. Binds two azurin molecules per heterotetramer. Tryptophan tryptophylquinone residue serves as cofactor. Tryptophan tryptophylquinone (TTQ) is formed by oxidation of the indole ring of a tryptophan to form tryptophylquinone followed by covalent cross-linking with another tryptophan residue. Post-translationally, predicted to be exported by the Tat system. The position of the signal peptide cleavage has been experimentally proven.

The protein resides in the periplasm. The catalysed reaction is an aralkylamine + 2 oxidized [azurin] + H2O = an aromatic aldehyde + 2 reduced [azurin] + NH4(+) + 2 H(+). Its activity is regulated as follows. Irreversibly inhibited by phenylhydrazine, hydroxylamine, semicarbazide, hydrazine and aminoguanidine. Reversibly inhibited by isonicotinic acid hydrazide (isoniazid) and isonicotinic acid 2-isopropyl hydrazide (iproniazid). Functionally, oxidizes primary aromatic amines and, more slowly, some long-chain aliphatic amines, but not methylamine or ethylamine. Uses azurin as an electron acceptor to transfer electrons from the reduced tryptophylquinone cofactor. The polypeptide is Aralkylamine dehydrogenase light chain (Alcaligenes faecalis).